We begin with the raw amino-acid sequence, 372 residues long: uncharacterized protein (372 aa).

Residue 4–18 (YIIVGAGILGASTAY) coordinates FAD.

Belongs to the DadA oxidoreductase family. The cofactor is FAD.

This is an uncharacterized protein from Bacillus subtilis (strain 168).